Consider the following 158-residue polypeptide: Dysbindin domain-containing protein 2 (158 aa).

Positions phenylalanine 79–serine 158 are disordered. Over residues proline 106–serine 131 the composition is skewed to low complexity. A phosphoserine mark is found at serine 119 and serine 120. A Phosphothreonine modification is found at threonine 137. At serine 142 the chain carries Phosphoserine. The span at serine 142 to glycine 151 shows a compositional bias: acidic residues.

This sequence belongs to the dysbindin family. Monomer. Interacts with CSNK1D and CSNK1E.

Its function is as follows. May modulate the activity of casein kinase-1. Inhibits CSNK1D autophosphorylation (in vitro). The sequence is that of Dysbindin domain-containing protein 2 (Dbndd2) from Mus musculus (Mouse).